A 61-amino-acid chain; its full sequence is Small ribosomal subunit protein uS14 (61 aa).

Cys-24, Cys-27, Cys-40, and Cys-43 together coordinate Zn(2+).

The protein belongs to the universal ribosomal protein uS14 family. Zinc-binding uS14 subfamily. Part of the 30S ribosomal subunit. Contacts proteins S3 and S10. Zn(2+) serves as cofactor.

In terms of biological role, binds 16S rRNA, required for the assembly of 30S particles and may also be responsible for determining the conformation of the 16S rRNA at the A site. This chain is Small ribosomal subunit protein uS14, found in Chloroflexus aurantiacus (strain ATCC 29364 / DSM 637 / Y-400-fl).